Consider the following 579-residue polypeptide: Acyl-coenzyme A synthetase ACSM5, mitochondrial (579 aa).

A mitochondrion-targeting transit peptide spans 1–26 (MRPWLRHLVLQALRNSRAFCGSHGKP). Lys-97 bears the N6-acetyllysine; alternate mark. Lys-97 carries the post-translational modification N6-succinyllysine; alternate. Lys-152 is subject to N6-acetyllysine. 230-238 (TSGTTGAPK) contributes to the ATP binding site. Lys-303 is subject to N6-acetyllysine; alternate. Lys-303 carries the N6-succinyllysine; alternate modification. ATP contacts are provided by residues 368–373 (EGYGQS), Asp-455, Arg-470, and Lys-566.

It belongs to the ATP-dependent AMP-binding enzyme family. Requires Mg(2+) as cofactor. It depends on Mn(2+) as a cofactor. Detected in kidney and liver.

It is found in the mitochondrion matrix. It carries out the reaction a medium-chain fatty acid + ATP + CoA = a medium-chain fatty acyl-CoA + AMP + diphosphate. Catalyzes the activation of fatty acids by CoA to produce an acyl-CoA, the first step in fatty acid metabolism. The protein is Acyl-coenzyme A synthetase ACSM5, mitochondrial (ACSM5) of Homo sapiens (Human).